The chain runs to 219 residues: uncharacterized protein (219 aa).

A signal peptide spans 1 to 22 (MKKRRKICYCNTALLLMILLAG). Residue Cys-23 is the site of N-palmitoyl cysteine attachment. Cys-23 carries S-diacylglycerol cysteine lipidation. Positions 26 to 89 (SKDGEAQQPS…SAEEKSKEDN (64 aa)) are disordered. The segment covering 32 to 42 (QQPSNQASAVQ) has biased composition (polar residues). Basic and acidic residues predominate over residues 43 to 61 (TDEKHTEPEESTKIRKDEA).

It is found in the cell membrane. This is an uncharacterized protein from Bacillus subtilis (strain 168).